Here is a 389-residue protein sequence, read N- to C-terminus: Lipid-A-disaccharide synthase (389 aa).

This sequence belongs to the LpxB family.

It carries out the reaction a lipid X + a UDP-2-N,3-O-bis[(3R)-3-hydroxyacyl]-alpha-D-glucosamine = a lipid A disaccharide + UDP + H(+). The protein operates within bacterial outer membrane biogenesis; LPS lipid A biosynthesis. Condensation of UDP-2,3-diacylglucosamine and 2,3-diacylglucosamine-1-phosphate to form lipid A disaccharide, a precursor of lipid A, a phosphorylated glycolipid that anchors the lipopolysaccharide to the outer membrane of the cell. The protein is Lipid-A-disaccharide synthase of Burkholderia vietnamiensis (strain G4 / LMG 22486) (Burkholderia cepacia (strain R1808)).